A 431-amino-acid polypeptide reads, in one-letter code: Protein PIN-LIKES 6 (431 aa).

Topologically, residues 1-29 (MIARILAALADSMEMPVAAGGGSVLGTIK) are lumenal. The chain crosses the membrane as a helical span at residues 30–50 (IAVMPIAKVFTMCFLGLLMAS). The Cytoplasmic portion of the chain corresponds to 51-66 (KYVNILPPSGRKLLNG). The helical transmembrane segment at 67–87 (LVFSLLLPCLIFSQLGQAVTL) threads the bilayer. Over 88–93 (QKMLQW) the chain is Lumenal. Residues 94–114 (WFIPVNVVLGTISGSIIGFIV) form a helical membrane-spanning segment. The Cytoplasmic segment spans residues 115–128 (ASIVRPPYPYFKFT). A helical transmembrane segment spans residues 129 to 149 (IIQIGVGNIGNVPLVLLAALC). The Lumenal portion of the chain corresponds to 150–169 (RDTSNPFGDSEKCSIDGTAY). The helical transmembrane segment at 170 to 190 (ISFGQWVGAIILYTYVYQMFA) threads the bilayer. Topologically, residues 191 to 268 (PPPEGFDAEE…FLYEKLKLKQ (78 aa)) are cytoplasmic. A helical transmembrane segment spans residues 269-289 (IVQPAIVASILAMILGAIPFT). Topologically, residues 290-306 (KKLIFTNGAPLFFFTDS) are lumenal. The chain crosses the membrane as a helical span at residues 307–327 (CMILGDAMIPCILLALGGNLI). Topologically, residues 328–340 (NGPGSSKLGFKTT) are cytoplasmic. Residues 341-361 (AAIIIGRLVLVPPVGLGIVTV) form a helical membrane-spanning segment. Residues 362 to 376 (ADKLGFLPADDKMFR) lie on the Lumenal side of the membrane. The chain crosses the membrane as a helical span at residues 377–397 (FVLLLQHTMPTSVLSGAVANL). Topologically, residues 398–406 (RGCGRESAA) are cytoplasmic. A helical transmembrane segment spans residues 407–427 (VLFWVHIFAIFSMAGWMVLYI). Topologically, residues 428–431 (NILF) are lumenal.

This sequence belongs to the auxin efflux carrier (TC 2.A.69.2) family. As to expression, expressed in seedlings, rosette and cauline leaves, stems and flowers.

The protein localises to the endoplasmic reticulum membrane. Its function is as follows. Involved in cellular auxin homeostasis by regulating auxin metabolism. Regulates intracellular auxin accumulation at the endoplasmic reticulum and thus auxin availability for nuclear auxin signaling. The protein is Protein PIN-LIKES 6 of Arabidopsis thaliana (Mouse-ear cress).